Reading from the N-terminus, the 353-residue chain is Keratocan (353 aa).

The signal sequence occupies residues 1–21; it reads MMTLKVCPSLLLLFLVHSVWT. The LRRNT domain maps to 34–72; it reads EHWSHYTFECPQECFCPPSFPNALYCDNKGLKEIPAIPA. 2 disulfides stabilise this stretch: Cys43-Cys49 and Cys47-Cys59. 10 LRR repeats span residues 73 to 94, 97 to 118, 123 to 143, 144 to 165, 168 to 188, 194 to 214, 215 to 236, 239 to 262, 264 to 283, and 284 to 305; these read RIWY…PFVN, HLRW…SGVL, RLLY…PLPV, GLEQ…VFSN, NLTM…QSDT, SLMQ…SIPA, NTLQ…YFSA, KVTF…GFNV, SILD…PINA, and HLEH…QICP. Asn94 is a glycosylation site (N-linked (GlcNAc...) (keratan sulfate) asparagine). A glycan (N-linked (GlcNAc...) asparagine) is linked at Asn168. N-linked (GlcNAc...) (keratan sulfate) asparagine glycans are attached at residues Asn223 and Asn261. Asn299 carries N-linked (GlcNAc...) asparagine glycosylation. An intrachain disulfide couples Cys304 to Cys344.

This sequence belongs to the small leucine-rich proteoglycan (SLRP) family. SLRP class II subfamily. In terms of processing, binds keratan sulfate chains.

It localises to the secreted. It is found in the extracellular space. Its subcellular location is the extracellular matrix. Its function is as follows. Plays an important role in generating and maintaining a transparent matrix within the corneal stroma. This chain is Keratocan (KERA), found in Gallus gallus (Chicken).